The primary structure comprises 313 residues: Ribosomal RNA small subunit methyltransferase H (313 aa).

S-adenosyl-L-methionine contacts are provided by residues 35 to 37, Asp55, Phe79, Asp100, and Gln107; that span reads GGH.

Belongs to the methyltransferase superfamily. RsmH family.

The protein localises to the cytoplasm. The enzyme catalyses cytidine(1402) in 16S rRNA + S-adenosyl-L-methionine = N(4)-methylcytidine(1402) in 16S rRNA + S-adenosyl-L-homocysteine + H(+). In terms of biological role, specifically methylates the N4 position of cytidine in position 1402 (C1402) of 16S rRNA. In Burkholderia thailandensis (strain ATCC 700388 / DSM 13276 / CCUG 48851 / CIP 106301 / E264), this protein is Ribosomal RNA small subunit methyltransferase H.